The following is a 162-amino-acid chain: Phosphopantetheine adenylyltransferase (162 aa).

Threonine 14 contributes to the substrate binding site. Residues 14-15 (TF) and histidine 22 contribute to the ATP site. Residues lysine 46, leucine 78, and arginine 92 each contribute to the substrate site. ATP is bound by residues 93–95 (GLR), glutamate 103, and 128–134 (HSFISSS).

This sequence belongs to the bacterial CoaD family. In terms of assembly, homohexamer. It depends on Mg(2+) as a cofactor.

The protein localises to the cytoplasm. The catalysed reaction is (R)-4'-phosphopantetheine + ATP + H(+) = 3'-dephospho-CoA + diphosphate. It participates in cofactor biosynthesis; coenzyme A biosynthesis; CoA from (R)-pantothenate: step 4/5. In terms of biological role, reversibly transfers an adenylyl group from ATP to 4'-phosphopantetheine, yielding dephospho-CoA (dPCoA) and pyrophosphate. The sequence is that of Phosphopantetheine adenylyltransferase from Xylella fastidiosa (strain 9a5c).